We begin with the raw amino-acid sequence, 165 residues long: UPF0254 protein MMP0935 (165 aa).

Belongs to the UPF0254 family.

This Methanococcus maripaludis (strain DSM 14266 / JCM 13030 / NBRC 101832 / S2 / LL) protein is UPF0254 protein MMP0935.